Consider the following 395-residue polypeptide: Receptor-like cytoplasmic kinase 176 (395 aa).

The interval 1–45 (MGNCWGAKISSESPCRSASSPSGGTSKYASNSSVSAASVPPTPRS) is disordered. Low complexity-rich tracts occupy residues 10–22 (SSES…SSPS) and 29–39 (ASNSSVSAASV). Residues 70–355 (FRPDSVLGEG…EQVVAVLEQL (286 aa)) enclose the Protein kinase domain. ATP contacts are provided by residues 76–84 (LGEGGFGSV) and lysine 108. Aspartate 205 acts as the Proton acceptor in catalysis. The disordered stretch occupies residues 359–395 (KETGANPQLQKKSSSKNAGSNGSKPSSKGKPANARLV). Residues 369–395 (KKSSSKNAGSNGSKPSSKGKPANARLV) are compositionally biased toward low complexity.

Belongs to the protein kinase superfamily. Ser/Thr protein kinase family. In terms of assembly, interacts with CERK1.

It carries out the reaction L-seryl-[protein] + ATP = O-phospho-L-seryl-[protein] + ADP + H(+). The enzyme catalyses L-threonyl-[protein] + ATP = O-phospho-L-threonyl-[protein] + ADP + H(+). In terms of biological role, functions downstream of CERK1 in the microbial peptidoglycans (PGNs) and fungal chitin signaling pathways that mediate innate immunity. Participates in the activation of defense genes during response to PGN and chitin. The polypeptide is Receptor-like cytoplasmic kinase 176 (Oryza sativa subsp. japonica (Rice)).